A 337-amino-acid chain; its full sequence is D-alanine--D-alanine ligase (337 aa).

An ATP-grasp domain is found at 126 to 326; it reads KQIWISNGLS…YADLVLWLLS (201 aa). 152–207 is a binding site for ATP; the sequence is VKHLGLPLIVKPAHEGSSLGLTKVKSVEELPAAYQLAAGLDKKVIAETCIVGDELT. Residues Asp-279, Glu-293, and Asn-295 each coordinate Mg(2+).

The protein belongs to the D-alanine--D-alanine ligase family. The cofactor is Mg(2+). It depends on Mn(2+) as a cofactor.

It is found in the cytoplasm. It catalyses the reaction 2 D-alanine + ATP = D-alanyl-D-alanine + ADP + phosphate + H(+). It participates in cell wall biogenesis; peptidoglycan biosynthesis. In terms of biological role, cell wall formation. The sequence is that of D-alanine--D-alanine ligase from Polynucleobacter asymbioticus (strain DSM 18221 / CIP 109841 / QLW-P1DMWA-1) (Polynucleobacter necessarius subsp. asymbioticus).